The chain runs to 210 residues: Uridine kinase (210 aa).

12–19 (GGSGSGKT) contacts ATP.

The protein belongs to the uridine kinase family.

The protein resides in the cytoplasm. The enzyme catalyses uridine + ATP = UMP + ADP + H(+). The catalysed reaction is cytidine + ATP = CMP + ADP + H(+). Its pathway is pyrimidine metabolism; CTP biosynthesis via salvage pathway; CTP from cytidine: step 1/3. It participates in pyrimidine metabolism; UMP biosynthesis via salvage pathway; UMP from uridine: step 1/1. This Leuconostoc citreum (strain KM20) protein is Uridine kinase.